The primary structure comprises 621 residues: CEP295 N-terminal-like protein (621 aa).

The interval 142 to 253 (GGRARENEPD…RSKGADLERS (112 aa)) is disordered. Positions 159–170 (RSARPPRAKEKH) are enriched in basic residues. A compositionally biased stretch (basic and acidic residues) spans 171-185 (RAALSEERSCREELG). Over residues 203–213 (KPQTTKATGRM) the composition is skewed to polar residues. Residues 219–229 (PPEKRKGRPEP) show a composition bias toward basic and acidic residues. Residues 328-359 (QCTLREKNKWQKELELAFEELFNINRKLKKHL) adopt a coiled-coil conformation. Disordered stretches follow at residues 385 to 421 (CGAG…ASKT), 491 to 529 (DQAD…PDMS), and 543 to 586 (REQR…DRHS). Residues 498 to 525 (STASRQRQKAEMEQRRQKQLESLEQMEH) are a coiled coil. The segment covering 505–529 (QKAEMEQRRQKQLESLEQMEHPDMS) has biased composition (basic and acidic residues). A compositionally biased stretch (polar residues) spans 568 to 578 (ELSTTSPSGTS).

It is found in the cell projection. The protein resides in the cilium. The sequence is that of CEP295 N-terminal-like protein from Homo sapiens (Human).